Consider the following 106-residue polypeptide: Large ribosomal subunit protein P2 (106 aa).

A disordered region spans residues 79-106 (GAGAVAEAKKEEPEEEEADDDMGFGLFD). The span at 91-100 (PEEEEADDDM) shows a compositional bias: acidic residues.

Belongs to the eukaryotic ribosomal protein P1/P2 family. P1 and P2 exist as dimers at the large ribosomal subunit. Post-translationally, phosphorylated.

Its function is as follows. Plays an important role in the elongation step of protein synthesis. In Leishmania infantum, this protein is Large ribosomal subunit protein P2 (LIP).